The primary structure comprises 157 residues: Arginine repressor (157 aa).

Belongs to the ArgR family.

The protein resides in the cytoplasm. It participates in amino-acid biosynthesis; L-arginine biosynthesis [regulation]. In terms of biological role, regulates arginine biosynthesis genes. This is Arginine repressor from Bacteroides thetaiotaomicron (strain ATCC 29148 / DSM 2079 / JCM 5827 / CCUG 10774 / NCTC 10582 / VPI-5482 / E50).